A 512-amino-acid polypeptide reads, in one-letter code: Cytochrome P450 monooxygenase paxQ (512 aa).

The next 2 membrane-spanning stretches (helical) occupy residues 3-23 and 35-55; these read FVLS…LVSI and LQIP…ISAL. Cys453 provides a ligand contact to heme.

The protein belongs to the cytochrome P450 family. The cofactor is heme.

The protein localises to the membrane. The protein operates within secondary metabolite biosynthesis. Its function is as follows. Cytochrome P450 monooxygenase; part of the gene cluster that mediates the biosynthesis of paxilline, a mycotoxin that acts as an inhibitor of mammalian maxi-K channels. PaxG, the geranylgeranyl diphosphate (GGPP) synthase is proposed to catalyze the first step in paxilline biosynthesis. Condensation of indole-3-glycerol phosphate with GGPP by paxC then forms 3-geranylgeranylindole (3-GGI), followed by epoxidation and cyclization of this intermediate (by paxM and paxB) to form paspaline. Paspaline is subsequently converted to 13-desoxypaxilline by paxP, the latter being then converted to paxilline by paxQ. Finally paxilline can be mono- and di-prenylated by paxD. PaxQ can also utilized beta-paxitriol and alpha-PC-M6 as substrates converting them to alpha-paxitriol. This Penicillium paxilli protein is Cytochrome P450 monooxygenase paxQ.